The sequence spans 321 residues: ATP-dependent 6-phosphofructokinase (321 aa).

Gly-12 serves as a coordination point for ATP. Residues 22–26 (RAVVR) and 55–60 (RYSVSD) each bind ADP. Residues 73-74 (RF) and 103-106 (GDGS) contribute to the ATP site. Asp-104 is a binding site for Mg(2+). 127-129 (TID) contributes to the substrate binding site. Catalysis depends on Asp-129, which acts as the Proton acceptor. Arg-156 serves as a coordination point for ADP. Residues Arg-164 and 171-173 (MGR) each bind substrate. ADP-binding positions include 187–189 (GCE) and 215–217 (KRH). Substrate is bound by residues Glu-224, Arg-245, and 251–254 (HVQR).

The protein belongs to the phosphofructokinase type A (PFKA) family. ATP-dependent PFK group I subfamily. Prokaryotic clade 'B1' sub-subfamily. Homotetramer. The cofactor is Mg(2+).

Its subcellular location is the cytoplasm. The enzyme catalyses beta-D-fructose 6-phosphate + ATP = beta-D-fructose 1,6-bisphosphate + ADP + H(+). The protein operates within carbohydrate degradation; glycolysis; D-glyceraldehyde 3-phosphate and glycerone phosphate from D-glucose: step 3/4. Allosterically activated by ADP and other diphosphonucleosides, and allosterically inhibited by phosphoenolpyruvate. In terms of biological role, catalyzes the phosphorylation of D-fructose 6-phosphate to fructose 1,6-bisphosphate by ATP, the first committing step of glycolysis. In Actinobacillus succinogenes (strain ATCC 55618 / DSM 22257 / CCUG 43843 / 130Z), this protein is ATP-dependent 6-phosphofructokinase.